Here is a 292-residue protein sequence, read N- to C-terminus: Diaminopimelate epimerase (292 aa).

Residues asparagine 13, glutamine 46, and asparagine 66 each coordinate substrate. Cysteine 75 acts as the Proton donor in catalysis. Substrate-binding positions include 76–77 (GN), asparagine 166, asparagine 199, and 217–218 (ER). The active-site Proton acceptor is cysteine 226. 227 to 228 (GT) contributes to the substrate binding site.

Belongs to the diaminopimelate epimerase family. Homodimer.

The protein localises to the cytoplasm. It carries out the reaction (2S,6S)-2,6-diaminopimelate = meso-2,6-diaminopimelate. Its pathway is amino-acid biosynthesis; L-lysine biosynthesis via DAP pathway; DL-2,6-diaminopimelate from LL-2,6-diaminopimelate: step 1/1. Functionally, catalyzes the stereoinversion of LL-2,6-diaminopimelate (L,L-DAP) to meso-diaminopimelate (meso-DAP), a precursor of L-lysine and an essential component of the bacterial peptidoglycan. This Ralstonia pickettii (strain 12J) protein is Diaminopimelate epimerase.